The chain runs to 445 residues: Acetylcholine-gated chloride channel subunit acc-2 (445 aa).

The N-terminal stretch at 1–26 (MIFTLLSTLPVLIITTELDYSELVHS) is a signal peptide. Residues 27–258 (AELVSSSSYI…LHVTIIFERR (232 aa)) are Extracellular-facing. 4 N-linked (GlcNAc...) asparagine glycosylation sites follow: N46, N59, N121, and N162. An intrachain disulfide couples C177 to C191. N218 carries N-linked (GlcNAc...) asparagine glycosylation. The helical transmembrane segment at 259-279 (FIWYFMQAYLPTYLTIFISWI) threads the bilayer. Residues 280–286 (SFSLGSR) are Cytoplasmic-facing. Residues 287 to 307 (AIPARTMLGVNSLLAIVFSFG) form a helical membrane-spanning segment. Topologically, residues 308 to 326 (NIMRNLPRVSYIKGIDVWM) are extracellular. The helical transmembrane segment at 327 to 347 (LVSMTFIFCSLLELAIVGFMV) threads the bilayer. Over 348–407 (RDETVAKKKQQKKISGNISREESPHGIISERRFMFPPGCSESSKSLSSCTSGWTPERIDS) the chain is Cytoplasmic. The helical transmembrane segment at 408–428 (ISSVMFPFSFFVFNIIYWFYY) threads the bilayer. The Extracellular portion of the chain corresponds to 429–445 (IHRKEIIKQNLINRVDG).

Belongs to the ligand-gated ion channel (TC 1.A.9) family. As to quaternary structure, homopentamer (in vitro). May interact with either acc-3 or acc-4; the interactions do not result in significant heteropentameric ion channel activity. Expressed in RIA, RIG, PHA and AIZ glutamatergic neurons, URX and RIH cholinergic neurons, and in male-specific MCM neurons.

It localises to the cell membrane. In terms of biological role, acetylcholine-gated chloride channel subunit. Currents in channels are triggered in response to acetylcholine. Channel properties may be modulated by the formation of homomeric and heteromeric channels. This Caenorhabditis elegans protein is Acetylcholine-gated chloride channel subunit acc-2.